We begin with the raw amino-acid sequence, 990 residues long: MRAGLSTIQQTLTPEAATVLNQSIAEAARRNHGQTTPLHVAATLLASPAGFLRRACIRSHPNSSHPLQCRALELCFSVALERLPTATTTPGNDPPISNALMAALKRAQAHQRRGCPEQQQQPLLAVKVELEQLIISILDDPSVSRVMREASFSSPAVKATIEQSLNNSVTPTPIPSVSSVGLNFRPGGGGPMTRNSYLNPRLQQNASSVQSGVSKNDDVERVMDILGRAKKKNPVLVGDSEPGRVIREILKKIEVGEVGNLAVKNSKVVSLEEISSDKALRIKELDGLLQTRLKNSDPIGGGGVILDLGDLKWLVEQPSSTQPPATVAVEIGRTAVVELRRLLEKFEGRLWFIGTATCETYLRCQVYHPSVETDWDLQAVSVAAKAPASGVFPRLANNLESFTPLKSFVPANRTLKCCPQCLQSYERELAEIDSVSSPEVKSEVAQPKQLPQWLLKAKPVDRLPQAKIEEVQKKWNDACVRLHPSFHNKNERIVPIPVPITLTTSPYSPNMLLRQPLQPKLQPNRELRERVHLKPMSPLVAEQAKKKSPPGSPVQTDLVLGRAEDSEKAGDVQVRDFLGCISSESVQNNNNISVLQKENLGNSLDIDLFKKLLKGMTEKVWWQNDAAAAVAATVSQCKLGNGKRRGVLSKGDVWLLFSGPDRVGKRKMVSALSSLVYGTNPIMIQLGSRQDAGDGNSSFRGKTALDKIAETVKRSPFSVILLEDIDEADMLVRGSIKQAMDRGRIRDSHGREISLGNVIFVMTASWHFAGTKTSFLDNEAKLRDLASESWRLRLCMREKFGKRRASWLCSDEERLTKPKKEHGSGLSFDLNQAADTDDGSHNTSDLTTDNDQDEQGFSGKLSLQCVPFAFHDMVSRVDDAVAFRAVDFAAVRRRITETLSERFETIIGESLSVEVEEEALQRILSGVWLGQTELEEWIEKAIVPVLSQLKARVSSSGTYGDCTVARLELDEDSGERNAGDLLPTTITLAV.

The region spanning 8–167 (IQQTLTPEAA…KATIEQSLNN (160 aa)) is the Clp R domain. Repeat stretches follow at residues 12–83 (LTPE…LERL) and 96–167 (ISNA…SLNN). Residues 818 to 855 (PKKEHGSGLSFDLNQAADTDDGSHNTSDLTTDNDQDEQ) are disordered. The EAR signature appears at 828–832 (FDLNQ).

Belongs to the ClpA/ClpB family. In terms of assembly, interacts probably with TPL/TPR in an EAR-motif dependent manner. Interacts with TPL, TPR1, TPR2 and TPR4. As to expression, highly expressed in dry seeds. Expressed in seedlings, rosette leaves and senescing leaves. Detected in roots and axillary shoots. Expressed in the primary rosette buds and expanding leaves of adult rosettes, the vasculature of the hypocotyls, cotyledons, and mature roots, in the midvein and petioles of young leaves, the young leaf periphery, stomata, and the root caps.

Its function is as follows. Probable component of a transcriptional corepressor complex that acts downstream of MAX2 to negatively regulate karrikins/strigolactone responses. Probable target of MAX2 during germination and seedling photomorphogenesis. Acts probably specifically in the karrikin pathway. This Arabidopsis thaliana (Mouse-ear cress) protein is Protein SUPPRESSOR OF MAX2 1.